A 324-amino-acid polypeptide reads, in one-letter code: Antihemorrhagic factor cMSF (324 aa).

Positions 1 to 19 are cleaved as a signal peptide; sequence MHFLVALVLLGQIIGSTLS. 2 consecutive Cystatin fetuin-A-type domains span residues 22–130 and 141–254; these read VRGD…VKCH and RNCL…SDCV. The Cell attachment site motif lies at 23-25; the sequence is RGD. 7 disulfides stabilise this stretch: cysteine 28–cysteine 315, cysteine 85–cysteine 96, cysteine 110–cysteine 129, cysteine 143–cysteine 146, cysteine 205–cysteine 217, cysteine 230–cysteine 253, and cysteine 287–cysteine 291. N-linked (GlcNAc...) asparagine glycosylation occurs at asparagine 204. The N-linked (GlcNAc...) asparagine glycan is linked to asparagine 282.

In terms of assembly, homodimer. As to expression, expressed by the liver.

Its subcellular location is the secreted. Suppress hemorrhage induced by metalloproteinases from the same venom (brevilysin-H3, -H4, -H6) and from habu venom (metalloproteinases HR1A and HR1B). The non-hemorrhagic brevilysin-L4 is not inhibited by cMSF. Does not inhibit serine and cysteine proteases such as trypsin, chymotrypsin, thermolysin, and papain. The inhibition may occur by formation of a non-covalent complex between this protein and the proteinases at their metalloproteinase domains. The polypeptide is Antihemorrhagic factor cMSF (Gloydius brevicauda (Korean slamosa snake)).